Here is an 827-residue protein sequence, read N- to C-terminus: Probable beta-glucosidase H (827 aa).

Residue aspartate 223 is part of the active site. The region spanning 387-546 (RLLTNAVMHF…DSAEMVRSAV (160 aa)) is the PA14 domain. 4 N-linked (GlcNAc...) asparagine glycosylation sites follow: asparagine 471, asparagine 594, asparagine 600, and asparagine 625.

It belongs to the glycosyl hydrolase 3 family.

Its subcellular location is the secreted. The catalysed reaction is Hydrolysis of terminal, non-reducing beta-D-glucosyl residues with release of beta-D-glucose.. Its pathway is glycan metabolism; cellulose degradation. In terms of biological role, beta-glucosidases are one of a number of cellulolytic enzymes involved in the degradation of cellulosic biomass. Catalyzes the last step releasing glucose from the inhibitory cellobiose. The chain is Probable beta-glucosidase H (bglH) from Aspergillus flavus (strain ATCC 200026 / FGSC A1120 / IAM 13836 / NRRL 3357 / JCM 12722 / SRRC 167).